The primary structure comprises 237 residues: Ubiquinone biosynthesis O-methyltransferase (237 aa).

R38, G58, D79, and M124 together coordinate S-adenosyl-L-methionine.

Belongs to the methyltransferase superfamily. UbiG/COQ3 family.

It catalyses the reaction a 3-demethylubiquinol + S-adenosyl-L-methionine = a ubiquinol + S-adenosyl-L-homocysteine + H(+). The enzyme catalyses a 3-(all-trans-polyprenyl)benzene-1,2-diol + S-adenosyl-L-methionine = a 2-methoxy-6-(all-trans-polyprenyl)phenol + S-adenosyl-L-homocysteine + H(+). The protein operates within cofactor biosynthesis; ubiquinone biosynthesis. O-methyltransferase that catalyzes the 2 O-methylation steps in the ubiquinone biosynthetic pathway. This chain is Ubiquinone biosynthesis O-methyltransferase, found in Acinetobacter baumannii (strain ACICU).